An 88-amino-acid polypeptide reads, in one-letter code: MANIKSAKKRIKVIETKTLRNKMIKSALKTYIKKFEAAFEAKNVEESKTAFATVSKALDMAASKGIIHKNKAARKKSRLALKLNSLNA.

Belongs to the bacterial ribosomal protein bS20 family.

Functionally, binds directly to 16S ribosomal RNA. In Clostridium acetobutylicum (strain ATCC 824 / DSM 792 / JCM 1419 / IAM 19013 / LMG 5710 / NBRC 13948 / NRRL B-527 / VKM B-1787 / 2291 / W), this protein is Small ribosomal subunit protein bS20.